The primary structure comprises 245 residues: Small ribosomal subunit protein uS3 (245 aa).

In terms of domain architecture, KH type-2 spans 21 to 92 (LNEFLTRELA…SVELYAEKVA (72 aa)). A disordered region spans residues 215-245 (EEILPTTPVSEQKGAKPEVPVMPQGAPVPTA).

Belongs to the universal ribosomal protein uS3 family.

Its subcellular location is the cytoplasm. It is found in the nucleus. It localises to the nucleolus. The protein localises to the mitochondrion inner membrane. The protein resides in the cytoskeleton. Its subcellular location is the spindle. It carries out the reaction 2'-deoxyribonucleotide-(2'-deoxyribose 5'-phosphate)-2'-deoxyribonucleotide-DNA = a 3'-end 2'-deoxyribonucleotide-(2,3-dehydro-2,3-deoxyribose 5'-phosphate)-DNA + a 5'-end 5'-phospho-2'-deoxyribonucleoside-DNA + H(+). Functionally, component of the small ribosomal subunit. The ribosome is a large ribonucleoprotein complex responsible for the synthesis of proteins in the cell. Has endonuclease activity and plays a role in repair of damaged DNA. Also involved in other processes including regulation of transcription, translation of its cognate mRNA, spindle formation and chromosome movement during mitosis, and apoptosis. This chain is Small ribosomal subunit protein uS3 (rps3), found in Ictalurus punctatus (Channel catfish).